The sequence spans 178 residues: Cytochrome b6-f complex iron-sulfur subunit (178 aa).

Residues 20–42 (LLTFGTATGVALGALYPVANYFM) form a helical membrane-spanning segment. A Rieske domain is found at 65 to 161 (KTGWLATHQA…VDIEDDAVLV (97 aa)). [2Fe-2S] cluster-binding residues include Cys-107, His-109, Cys-125, and His-128. Cys-112 and Cys-127 are joined by a disulfide.

It belongs to the Rieske iron-sulfur protein family. The 4 large subunits of the cytochrome b6-f complex are cytochrome b6, subunit IV (17 kDa polypeptide, PetD), cytochrome f and the Rieske protein, while the 4 small subunits are PetG, PetL, PetM and PetN. The complex functions as a dimer. Requires [2Fe-2S] cluster as cofactor.

The protein resides in the cellular thylakoid membrane. The enzyme catalyses 2 oxidized [plastocyanin] + a plastoquinol + 2 H(+)(in) = 2 reduced [plastocyanin] + a plastoquinone + 4 H(+)(out). Component of the cytochrome b6-f complex, which mediates electron transfer between photosystem II (PSII) and photosystem I (PSI), cyclic electron flow around PSI, and state transitions. The chain is Cytochrome b6-f complex iron-sulfur subunit from Prochlorococcus marinus (strain MIT 9312).